The following is a 389-amino-acid chain: Chalcone synthase E (389 aa).

The active site involves Cys-164.

This sequence belongs to the thiolase-like superfamily. Chalcone/stilbene synthases family.

The enzyme catalyses (E)-4-coumaroyl-CoA + 3 malonyl-CoA + 3 H(+) = 2',4,4',6'-tetrahydroxychalcone + 3 CO2 + 4 CoA. It functions in the pathway secondary metabolite biosynthesis; flavonoid biosynthesis. Its function is as follows. The primary product of this enzyme is 4,2',4',6'-tetrahydroxychalcone (also termed naringenin-chalcone or chalcone) which can under specific conditions spontaneously isomerize into naringenin. This is Chalcone synthase E (CHSE) from Ipomoea nil (Japanese morning glory).